The chain runs to 63 residues: Cecropin-2 (63 aa).

The first 21 residues, 1–21 (MNFNKVLVLLAVIFAVFAGQT), serve as a signal peptide directing secretion. The propeptide occupies 22-23 (EA). Lys-62 is subject to Lysine amide.

The protein belongs to the cecropin family.

It is found in the secreted. In terms of biological role, cecropins have lytic and antibacterial activity against several Gram-positive and Gram-negative bacteria. In Ceratitis capitata (Mediterranean fruit fly), this protein is Cecropin-2 (CEC2).